The following is a 144-amino-acid chain: Deoxyuridine 5'-triphosphate nucleotidohydrolase (144 aa).

Residues 63-65 (RSG), asparagine 76, and 80-82 (TID) contribute to the substrate site.

It belongs to the dUTPase family. Mg(2+) serves as cofactor.

It carries out the reaction dUTP + H2O = dUMP + diphosphate + H(+). It participates in pyrimidine metabolism; dUMP biosynthesis; dUMP from dCTP (dUTP route): step 2/2. This enzyme is involved in nucleotide metabolism: it produces dUMP, the immediate precursor of thymidine nucleotides and it decreases the intracellular concentration of dUTP so that uracil cannot be incorporated into DNA. This chain is Deoxyuridine 5'-triphosphate nucleotidohydrolase, found in Alkaliphilus metalliredigens (strain QYMF).